The sequence spans 635 residues: Cytoplasmic polyadenylation element-binding protein 4 (635 aa).

Disordered regions lie at residues 1-70 (MQDD…TLRL), 149-284 (GFGG…GFNT), and 337-369 (LFPM…PHQN). The span at 14 to 30 (PQLQQESQEGQDKQTLS) shows a compositional bias: polar residues. The segment covering 166 to 182 (PSPHPHFQHPHNQHRRS) has biased composition (basic residues). Over residues 216–231 (GSYQSPSSTPSSTSWS) the composition is skewed to low complexity. The span at 232–241 (PGGGYGGWGS) shows a compositional bias: gly residues. Over residues 254–283 (PLNSISPLKKSFPNNQTQTQKYPRNNSGFN) the composition is skewed to polar residues. The span at 341-353 (EDERSYGEDERSD) shows a compositional bias: basic and acidic residues. 2 consecutive RRM domains span residues 378–469 (RKVF…PWNL) and 486–568 (KTIF…PYVL).

It belongs to the RRM CPEB family.

It is found in the cytoplasm. The protein localises to the cell projection. It localises to the dendrite. The protein resides in the dendritic spine. Its subcellular location is the postsynaptic density. It is found in the axon. The protein localises to the growth cone. It localises to the endoplasmic reticulum. The protein resides in the perinuclear region. Its function is as follows. Sequence-specific RNA-binding protein that binds to the cytoplasmic polyadenylation element (CPE), an uridine-rich sequence element (consensus sequence 5'-UUUUUAU-3') within the mRNA 3'-UTR. RNA binding results in a clear conformational change analogous to the Venus fly trap mechanism. This Danio rerio (Zebrafish) protein is Cytoplasmic polyadenylation element-binding protein 4 (cpeb4).